We begin with the raw amino-acid sequence, 237 residues long: Oligoribonuclease, mitochondrial (237 aa).

The N-terminal 25 residues, 1 to 25, are a transit peptide targeting the mitochondrion; that stretch reads MLGGSLGSRLLRGVGGTRGQFRARG. The 165-residue stretch at 43–207 folds into the Exonuclease domain; it reads MVWVDLEMTG…DDISESIKEL (165 aa). The Mg(2+) site is built by Asp47 and Glu49. Ser92 is subject to Phosphoserine. Tyr122 is subject to Phosphotyrosine. Position 147 (Asp147) interacts with Mg(2+). At Lys173 the chain carries N6-acetyllysine. Residue His194 is part of the active site. Asp199 contributes to the Mg(2+) binding site.

It belongs to the oligoribonuclease family. As to quaternary structure, homodimer. Homotetramer. Mn(2+) is required as a cofactor. It depends on Mg(2+) as a cofactor.

It is found in the mitochondrion intermembrane space. The protein localises to the mitochondrion matrix. Its subcellular location is the mitochondrion. The protein resides in the cytoplasm. It localises to the nucleus. Functionally, 3'-to-5'exoribonuclease that preferentially degrades DNA and RNA oligonucleotides composed of only two nucleotides. Binds and degrades longer oligonucleotides with a lower affinity. Plays dual roles in mitochondria, scavenging nanoRNAs (small RNA oligonucleotides of &lt;5 nucleotides) that are produced by the degradosome and clearing short RNAs that are generated by RNA processing. Essential for correct initiation of mitochondrial transcription, degrading mitochondrial RNA dinucleotides to prevent RNA-primed transcription at non-canonical sites in the mitochondrial genome. Essential for embryonic development. This is Oligoribonuclease, mitochondrial (REXO2) from Bos taurus (Bovine).